The primary structure comprises 158 residues: Endoribonuclease YbeY (158 aa).

Residues histidine 119, histidine 123, and aspartate 129 each contribute to the Zn(2+) site.

It belongs to the endoribonuclease YbeY family. Zn(2+) serves as cofactor.

It localises to the cytoplasm. Single strand-specific metallo-endoribonuclease involved in late-stage 70S ribosome quality control and in maturation of the 3' terminus of the 16S rRNA. This is Endoribonuclease YbeY from Chlamydia felis (strain Fe/C-56) (Chlamydophila felis).